A 298-amino-acid polypeptide reads, in one-letter code: Inosose dehydratase (298 aa).

The protein belongs to the IolE/MocC family. The cofactor is glutathione. Requires Co(2+) as cofactor. It depends on Mn(2+) as a cofactor.

The catalysed reaction is scyllo-inosose = 3D-3,5/4-trihydroxycyclohexane-1,2-dione + H2O. Its pathway is polyol metabolism; myo-inositol degradation into acetyl-CoA; acetyl-CoA from myo-inositol: step 2/7. Catalyzes the dehydration of inosose (2-keto-myo-inositol, 2KMI or 2,4,6/3,5-pentahydroxycyclohexanone) to 3D-(3,5/4)-trihydroxycyclohexane-1,2-dione (D-2,3-diketo-4-deoxy-epi-inositol). This chain is Inosose dehydratase, found in Bacillus thuringiensis (strain Al Hakam).